Reading from the N-terminus, the 205-residue chain is Pyridoxine/pyridoxamine 5'-phosphate oxidase (205 aa).

FMN-binding positions include 53 to 58 (RMVLLK), 68 to 69 (YT), Lys75, and Gln97. Position 58 (Lys58) interacts with substrate. 3 residues coordinate substrate: Tyr115, Arg119, and Ser123. FMN contacts are provided by residues 132–133 (QS) and Trp177. 183–185 (RLH) contributes to the substrate binding site. Arg187 serves as a coordination point for FMN.

This sequence belongs to the pyridoxamine 5'-phosphate oxidase family. Homodimer. It depends on FMN as a cofactor.

The enzyme catalyses pyridoxamine 5'-phosphate + O2 + H2O = pyridoxal 5'-phosphate + H2O2 + NH4(+). The catalysed reaction is pyridoxine 5'-phosphate + O2 = pyridoxal 5'-phosphate + H2O2. It functions in the pathway cofactor metabolism; pyridoxal 5'-phosphate salvage; pyridoxal 5'-phosphate from pyridoxamine 5'-phosphate: step 1/1. It participates in cofactor metabolism; pyridoxal 5'-phosphate salvage; pyridoxal 5'-phosphate from pyridoxine 5'-phosphate: step 1/1. In terms of biological role, catalyzes the oxidation of either pyridoxine 5'-phosphate (PNP) or pyridoxamine 5'-phosphate (PMP) into pyridoxal 5'-phosphate (PLP). In Mesorhizobium japonicum (strain LMG 29417 / CECT 9101 / MAFF 303099) (Mesorhizobium loti (strain MAFF 303099)), this protein is Pyridoxine/pyridoxamine 5'-phosphate oxidase.